Here is a 319-residue protein sequence, read N- to C-terminus: MKPVFLDFEQPIAELTNKIDELRFVQDESAVDISDEIHRLQKKSNDLTKSIFSKLTPAQISQVSRHPQRPYTLDYIEALFTDFEELHGDRHFADDYAIVGGLARFNGQSVMVVGHQKGRDTKEKIRRNFGMPRPEGYRKALRLMKTAEKFGLPVMTFIDTPGAYPGIGAEERGQSEAIGKNLYELTRLRVPVLCTVIGEGGSGGALAVAVGDYVNMLQYSTYSVISPEGCASILWKTAEKAADAAQALGITADRLQRLDLVDTVIKEPLGGAHRDFGQTMKNVKAVLEKQLHEAQSIPLADLLSRRFDRIMAYGKFSEQ.

A CoA carboxyltransferase C-terminal domain is found at 39–293 (RLQKKSNDLT…KAVLEKQLHE (255 aa)).

The protein belongs to the AccA family. In terms of assembly, acetyl-CoA carboxylase is a heterohexamer composed of biotin carboxyl carrier protein (AccB), biotin carboxylase (AccC) and two subunits each of ACCase subunit alpha (AccA) and ACCase subunit beta (AccD).

The protein localises to the cytoplasm. The catalysed reaction is N(6)-carboxybiotinyl-L-lysyl-[protein] + acetyl-CoA = N(6)-biotinyl-L-lysyl-[protein] + malonyl-CoA. It functions in the pathway lipid metabolism; malonyl-CoA biosynthesis; malonyl-CoA from acetyl-CoA: step 1/1. Its function is as follows. Component of the acetyl coenzyme A carboxylase (ACC) complex. First, biotin carboxylase catalyzes the carboxylation of biotin on its carrier protein (BCCP) and then the CO(2) group is transferred by the carboxyltransferase to acetyl-CoA to form malonyl-CoA. This chain is Acetyl-coenzyme A carboxylase carboxyl transferase subunit alpha, found in Neisseria meningitidis serogroup C / serotype 2a (strain ATCC 700532 / DSM 15464 / FAM18).